The primary structure comprises 423 residues: Adenylosuccinate synthetase (423 aa).

Residues 12–18 (GDEGKGK) and 40–42 (GHT) contribute to the GTP site. Residue aspartate 13 is the Proton acceptor of the active site. 2 residues coordinate Mg(2+): aspartate 13 and glycine 40. Residues 13–16 (DEGK), 38–41 (NAGH), threonine 129, arginine 143, glutamine 224, threonine 239, and arginine 303 contribute to the IMP site. Histidine 41 (proton donor) is an active-site residue. 299–305 (SVTGRQR) is a substrate binding site. GTP-binding positions include arginine 305, 331–333 (KGD), and 412–414 (SVG).

Belongs to the adenylosuccinate synthetase family. As to quaternary structure, homodimer. Mg(2+) serves as cofactor.

The protein localises to the cytoplasm. The enzyme catalyses IMP + L-aspartate + GTP = N(6)-(1,2-dicarboxyethyl)-AMP + GDP + phosphate + 2 H(+). It functions in the pathway purine metabolism; AMP biosynthesis via de novo pathway; AMP from IMP: step 1/2. Functionally, plays an important role in the de novo pathway of purine nucleotide biosynthesis. Catalyzes the first committed step in the biosynthesis of AMP from IMP. The chain is Adenylosuccinate synthetase from Flavobacterium johnsoniae (strain ATCC 17061 / DSM 2064 / JCM 8514 / BCRC 14874 / CCUG 350202 / NBRC 14942 / NCIMB 11054 / UW101) (Cytophaga johnsonae).